A 491-amino-acid chain; its full sequence is Delayed-rectifier potassium channel regulatory subunit KCNS3 (491 aa).

Residues 1–182 (MVFGEFFHRP…IRMENPAYCL (182 aa)) are Cytoplasmic-facing. The chain crosses the membrane as a helical span at residues 183–204 (SAKLIAISSLSVVLASIVAMCV). The Extracellular segment spans residues 205 to 220 (HSMSEFQNEDGEVDDP). A helical transmembrane segment spans residues 221–243 (VLEGVEIACIAWFTGELAVRLVA). Residues 244–254 (APCQKKFWKNP) are Cytoplasmic-facing. Residues 255 to 275 (LNIIDFVSIIPFYATLAVDTK) traverse the membrane as a helical segment. The Extracellular portion of the chain corresponds to 276–285 (EEESEDIENM). Residues 286–306 (GKVVQILRLMRIFRILKLARH) form a helical; Voltage-sensor membrane-spanning segment. At 307–321 (SVGLRSLGATLRHSY) the chain is on the cytoplasmic side. Residues 322-343 (HEVGLLLLFLSVGISIFSVLIY) form a helical membrane-spanning segment. At 344–357 (SVEKDDHTSSLTSI) the chain is on the extracellular side. Positions 358–369 (PICWWWATISMT) form an intramembrane region, helical. Residues 370 to 375 (TVGYGD) carry the Selectivity filter motif. Residues 370 to 377 (TVGYGDTH) lie within the membrane without spanning it. Residues 378–384 (PVTLAGK) lie on the Extracellular side of the membrane. A helical membrane pass occupies residues 385–413 (LIASTCIICGILVVALPITIIFNKFSKYY). The Cytoplasmic portion of the chain corresponds to 414 to 491 (QKQKDIDVDQ…TASLENCTAK (78 aa)).

This sequence belongs to the potassium channel family. S (TC 1.A.1.2) subfamily. Kv9.3/KCNS3 sub-subfamily. Heterotetramer with KCNB1. Does not form homomultimers.

The protein resides in the cell membrane. In terms of biological role, potassium channel regulatory subunit that modulates the delayed rectifier potassium channel activity of KCNB1 by namely slowing down the deactivation and inactivation time constants. While it does not form functional channel on its own, it can form functional heterotetrameric channels with KCNB1. This Oryctolagus cuniculus (Rabbit) protein is Delayed-rectifier potassium channel regulatory subunit KCNS3.